The chain runs to 506 residues: Cysteine--tRNA ligase (506 aa).

Cys34 is a binding site for Zn(2+). Positions 36 to 46 (PTVYDFAHIGN) match the 'HIGH' region motif. Residues Cys230, His269, and Glu273 each coordinate Zn(2+). Positions 302–306 (KMSKS) match the 'KMSKS' region motif. Lys305 provides a ligand contact to ATP.

It belongs to the class-I aminoacyl-tRNA synthetase family. As to quaternary structure, monomer. Requires Zn(2+) as cofactor.

Its subcellular location is the cytoplasm. It catalyses the reaction tRNA(Cys) + L-cysteine + ATP = L-cysteinyl-tRNA(Cys) + AMP + diphosphate. This Brucella suis biovar 1 (strain 1330) protein is Cysteine--tRNA ligase.